The following is a 51-amino-acid chain: Sec-independent protein translocase protein TatA (51 aa).

The chain crosses the membrane as a helical span at residues 1–21; sequence MGMSFSHLLIILLIIFVLFGA.

It belongs to the TatA/E family. As to quaternary structure, the Tat system comprises two distinct complexes: a TatABC complex, containing multiple copies of TatA, TatB and TatC subunits, and a separate TatA complex, containing only TatA subunits. Substrates initially bind to the TatABC complex, which probably triggers association of the separate TatA complex to form the active translocon.

It localises to the cell inner membrane. Its function is as follows. Part of the twin-arginine translocation (Tat) system that transports large folded proteins containing a characteristic twin-arginine motif in their signal peptide across membranes. TatA could form the protein-conducting channel of the Tat system. This is Sec-independent protein translocase protein TatA from Rickettsia bellii (strain RML369-C).